The chain runs to 155 residues: 6,7-dimethyl-8-ribityllumazine synthase (155 aa).

Residues Phe24, Ala58–Glu60, and Ala82–Ile84 each bind 5-amino-6-(D-ribitylamino)uracil. Ser87 to Thr88 lines the (2S)-2-hydroxy-3-oxobutyl phosphate pocket. Catalysis depends on His90, which acts as the Proton donor. Phe115 is a 5-amino-6-(D-ribitylamino)uracil binding site. Arg129 contacts (2S)-2-hydroxy-3-oxobutyl phosphate.

The protein belongs to the DMRL synthase family.

It carries out the reaction (2S)-2-hydroxy-3-oxobutyl phosphate + 5-amino-6-(D-ribitylamino)uracil = 6,7-dimethyl-8-(1-D-ribityl)lumazine + phosphate + 2 H2O + H(+). It participates in cofactor biosynthesis; riboflavin biosynthesis; riboflavin from 2-hydroxy-3-oxobutyl phosphate and 5-amino-6-(D-ribitylamino)uracil: step 1/2. Catalyzes the formation of 6,7-dimethyl-8-ribityllumazine by condensation of 5-amino-6-(D-ribitylamino)uracil with 3,4-dihydroxy-2-butanone 4-phosphate. This is the penultimate step in the biosynthesis of riboflavin. This chain is 6,7-dimethyl-8-ribityllumazine synthase, found in Chlorobium phaeobacteroides (strain BS1).